Reading from the N-terminus, the 334-residue chain is RNA polymerase sigma factor RpoS (334 aa).

The interval 21 to 50 is disordered; the sequence is PGIMLDESSADEQPSPRATPKATTSFSSKQ. The segment at 61–94 is sigma-70 factor domain-1; the sequence is DATQLYLNEIGFSPLLTPEEEVHFARLAQKGDPA. The sigma-70 factor domain-2 stretch occupies residues 99-169; it reads MIESNLRLVV…ERAIMNQTRT (71 aa). Residues 123 to 126 carry the Interaction with polymerase core subunit RpoC motif; sequence DLIE. Residues 179–254 are sigma-70 factor domain-3; sequence ELNVYLRAAR…DDRPTDPCEL (76 aa). The tract at residues 267-320 is sigma-70 factor domain-4; that stretch reads WLTELTDKQREVVIRRFGLRGHESSTLEEVGQEIGLTRERVRQIQVEALKRLRE. The H-T-H motif DNA-binding region spans 293-312; it reads LEEVGQEIGLTRERVRQIQV.

This sequence belongs to the sigma-70 factor family. RpoS subfamily. Interacts with the RNA polymerase core enzyme.

It localises to the cytoplasm. Its function is as follows. Sigma factors are initiation factors that promote the attachment of RNA polymerase to specific initiation sites and are then released. This sigma factor is the master transcriptional regulator of the stationary phase and the general stress response. The sequence is that of RNA polymerase sigma factor RpoS from Pseudomonas aeruginosa (strain ATCC 15692 / DSM 22644 / CIP 104116 / JCM 14847 / LMG 12228 / 1C / PRS 101 / PAO1).